The sequence spans 189 residues: Fucolectin-5 (189 aa).

The N-terminal stretch at 1–31 (MKTCNLTDRMKVKMIMLLFQILAISTLQSDS) is a signal peptide. The F5/8 type C-like stretch occupies residues 40–189 (QENVAVRGKA…VEVNALLPAN (150 aa)). Asp70, Asn72, and Ser81 together coordinate Ca(2+). Cystine bridges form between Cys82–Cys178, Cys114–Cys115, and Cys140–Cys156. Alpha-L-fucose-binding residues include His84 and Arg111. Residues 111–113 (RGD) carry the Cell attachment site motif. Position 118 (Arg118) interacts with alpha-L-fucose. Ca(2+) is bound by residues Cys178 and Glu179.

Belongs to the fucolectin family. As to quaternary structure, homotrimer. Gill mucous cells.

Its subcellular location is the secreted. In terms of biological role, acts as a defensive agent. Recognizes blood group fucosylated oligosaccharides including A, B, H and Lewis B-type antigens. Does not recognize Lewis A antigen and has low affinity for monovalent haptens. The polypeptide is Fucolectin-5 (Anguilla japonica (Japanese eel)).